The following is a 38-amino-acid chain: Cytochrome b6-f complex subunit 5 (38 aa).

A helical membrane pass occupies residues 5–25 (LLCGIVLGLIPVTLLGLFVDA).

This sequence belongs to the PetG family. As to quaternary structure, the 4 large subunits of the cytochrome b6-f complex are cytochrome b6, subunit IV (17 kDa polypeptide, PetD), cytochrome f and the Rieske protein, while the 4 small subunits are PetG, PetL, PetM and PetN. The complex functions as a dimer.

It localises to the cellular thylakoid membrane. Functionally, component of the cytochrome b6-f complex, which mediates electron transfer between photosystem II (PSII) and photosystem I (PSI), cyclic electron flow around PSI, and state transitions. PetG is required for either the stability or assembly of the cytochrome b6-f complex. The chain is Cytochrome b6-f complex subunit 5 from Prochlorococcus marinus (strain MIT 9313).